Consider the following 535-residue polypeptide: Dynein axonemal assembly factor 8 (535 aa).

Disordered regions lie at residues 112–215 (AELA…QERR), 228–267 (RDACGPASSDQGGVKEAPCHAVESAARSKMPLAEPPEGPP), 344–380 (PADTPQDTEEAGAGSRCSSRKPGSEAGPGPQLAQGMR), 395–444 (TVPP…LRSC), and 461–535 (IAQP…LDQL). Positions 125 to 139 (RTKDASSQEGRDPGR) are enriched in basic and acidic residues. Residues 166–175 (GSLSFNTKGS) are compositionally biased toward polar residues. Serine 175 carries the phosphoserine modification. The residue at position 362 (serine 362) is a Phosphoserine. Residues 415 to 424 (DSEEEEEEVE) show a composition bias toward acidic residues. Polar residues predominate over residues 435–444 (SPSSLGLRSC).

It localises to the dynein axonemal particle. The protein localises to the cytoplasm. In terms of biological role, in cyliated cells, dynein axonemal particle-specific protein required for deployment of ODA to the axoneme. Interacts with outer dynein arm (ODA) subunits. The polypeptide is Dynein axonemal assembly factor 8 (DNAAF8) (Macaca fascicularis (Crab-eating macaque)).